The primary structure comprises 166 residues: Polyadenylate-binding protein 2 (166 aa).

Positions 55–132 (QSVYVGNVDY…RPLKVTPKRT (78 aa)) constitute an RRM domain. The disordered stretch occupies residues 129 to 166 (PKRTNVPGMSRGRGRGRGRGRGRGRGGYRGRARGFAPY). The span at 140 to 160 (GRGRGRGRGRGRGRGGYRGRA) shows a compositional bias: basic residues.

The protein resides in the nucleus. This Schizosaccharomyces pombe (strain 972 / ATCC 24843) (Fission yeast) protein is Polyadenylate-binding protein 2 (pab2).